A 1045-amino-acid chain; its full sequence is E3 ubiquitin-protein ligase Topors (1045 aa).

Positions 1-35 are disordered; sequence MGSQPPLGSPLSREEGEAPPPAPASEGRRRSRRVR. The segment at 1–195 is E3 ubiquitin-protein ligase activity; that stretch reads MGSQPPLGSP…RERNASVYSP (195 aa). The tract at residues 51–374 is required for DNA-binding; it reads ELAASAPARP…MAAFDQHANY (324 aa). Residues Lys73, Lys76, Lys83, and Lys88 each participate in a glycyl lysine isopeptide (Lys-Gly) (interchain with G-Cter in SUMO2) cross-link. At Ser98 the chain carries Phosphoserine. The RING-type zinc finger occupies 103-142; it reads CPICLDRFDNVSYLDRCLHKFCFRCVQEWSKNKAECPLCK. A Glycyl lysine isopeptide (Lys-Gly) (interchain with G-Cter in SUMO2) cross-link involves residue Lys159. Position 194 is a phosphoserine (Ser194). Lys249 is covalently cross-linked (Glycyl lysine isopeptide (Lys-Gly) (interchain with G-Cter in SUMO2)). The required for sumoylation and localization to discrete nuclear foci stretch occupies residues 437 to 574; sequence SLLNTSDSSD…STSLSSPRNL (138 aa). The tract at residues 437–654 is interaction with SUMO1; it reads SLLNTSDSSD…RSRTRDSSWS (218 aa). Residues 442–475 form a disordered region; that stretch reads SDSSDEELVTGGATSQIQGVQTNDDLNNDSDDSS. The span at 453-463 shows a compositional bias: polar residues; sequence GATSQIQGVQT. The tract at residues 456–731 is interaction with p53/TP53; that stretch reads SQIQGVQTND…RRTLSRAHYS (276 aa). The tract at residues 456–882 is interaction with TOP1; sequence SQIQGVQTND…GKATDTTKHH (427 aa). Ser499 bears the Phosphoserine mark. The tract at residues 511-692 is disordered; it reads ETVKTQEQEQ…RSRNRDRYYL (182 aa). The segment covering 521 to 534 has biased composition (low complexity); the sequence is SYSSGDSDVSRCSS. Over residues 539-565 the composition is skewed to basic and acidic residues; the sequence is LGKDEQINKGHCDSSTRIKSKKEEKRS. Lys560 is covalently cross-linked (Glycyl lysine isopeptide (Lys-Gly) (interchain with G-Cter in SUMO)). Residues 566-578 are compositionally biased toward polar residues; sequence TSLSSPRNLNSSV. Ser585 is modified (phosphoserine). Composition is skewed to basic residues over residues 588–597, 613–630, and 637–647; these read NHRHRKRGRS, KNHR…KRSR, and PRGRRDKKRSR. Positions 654–669 are enriched in low complexity; it reads SRRSQTLSLSSESTSR. Residue Lys701 forms a Glycyl lysine isopeptide (Lys-Gly) (interchain with G-Cter in SUMO2) linkage. The segment at 713-936 is disordered; the sequence is RDGYESSYRR…DNSGPQDPLQ (224 aa). The residue at position 718 (Ser718) is a Phosphoserine; by PLK1. The span at 721–730 shows a compositional bias: basic residues; sequence RRRTLSRAHY. The span at 731-747 shows a compositional bias: polar residues; the sequence is SRQSSSPEFRVQSFSER. Ser734 carries the post-translational modification Phosphoserine. Basic and acidic residues-rich tracts occupy residues 755-766 and 816-825; these read NHSERKYYYYER and FASKAKDSHY. Glycyl lysine isopeptide (Lys-Gly) (interchain with G-Cter in SUMO2) cross-links involve residues Lys819 and Lys837. The span at 854-863 shows a compositional bias: basic residues; the sequence is KHKRRKRKTR. The interaction with UBE2I stretch occupies residues 854 to 917; the sequence is KHKRRKRKTR…ITIDSDSDKD (64 aa). Ser864 and Ser866 each carry phosphoserine. The span at 880-897 shows a compositional bias: basic residues; sequence KHHKKKKKKHKKKHKKHH. Phosphoserine is present on residues Ser912, Ser914, and Ser1028. The segment covering 913 to 923 has biased composition (basic and acidic residues); it reads DSDKDSEVKED.

As to quaternary structure, interacts with PARK7/DJ-1. Interacts with TOP1. Interacts with p53/TP53; can both ubiquitinate and sumoylate p53/TP53. Interacts with the SUMO1 conjugating enzyme UBE2I. Interacts with SUMO1. Interacts with NKX3-1; polyubiquitinates NKX3-1 and induces its proteasomal degradation. Interacts with SIN3A; sumoylates SIN3A. Interacts with IKBKE; induced by DNA damage. In terms of processing, phosphorylation at Ser-98 regulates the E3 ubiquitin-protein ligase activity but not the SUMO1-protein ligase activity. Phosphorylation at Ser-718 increases the E3 ubiquitin-protein ligase activity versus the SUMO1-protein ligase activity resulting in increased p53/TP53 ubiquitination and degradation. Post-translationally, sumoylated. In terms of tissue distribution, expressed at highest levels in testis and at lower levels in adrenal gland, bone marrow, brain, colon, heart, kidney, liver, muscle, ovary, pancreas, placenta, prostate, skeletal muscle, skin, small intestine, spleen, stomach, testis, thymus, thyroid and uterus. Expressed in the alveolar epithelium of the lung. Expression is commonly decreased in colon adenocarcinomas and lung cancers.

The protein localises to the nucleus. It localises to the PML body. It catalyses the reaction S-ubiquitinyl-[E2 ubiquitin-conjugating enzyme]-L-cysteine + [acceptor protein]-L-lysine = [E2 ubiquitin-conjugating enzyme]-L-cysteine + N(6)-ubiquitinyl-[acceptor protein]-L-lysine.. In terms of biological role, functions as an E3 ubiquitin-protein ligase and as an E3 SUMO1-protein ligase. Probable tumor suppressor involved in cell growth, cell proliferation and apoptosis that regulates p53/TP53 stability through ubiquitin-dependent degradation. May regulate chromatin modification through sumoylation of several chromatin modification-associated proteins. May be involved in DNA damage-induced cell death through IKBKE sumoylation. The protein is E3 ubiquitin-protein ligase Topors (TOPORS) of Homo sapiens (Human).